Here is a 106-residue protein sequence, read N- to C-terminus: CRISPR-associated endoribonuclease Cas2 (106 aa).

D22 is a binding site for Mg(2+).

It belongs to the CRISPR-associated endoribonuclease Cas2 protein family. In terms of assembly, homodimer, forms a heterotetramer with a Cas1 homodimer. The cofactor is Mg(2+).

Functionally, CRISPR (clustered regularly interspaced short palindromic repeat), is an adaptive immune system that provides protection against mobile genetic elements (viruses, transposable elements and conjugative plasmids). CRISPR clusters contain sequences complementary to antecedent mobile elements and target invading nucleic acids. CRISPR clusters are transcribed and processed into CRISPR RNA (crRNA). Functions as a ssRNA-specific endoribonuclease. Involved in the integration of spacer DNA into the CRISPR cassette. This Fusobacterium nucleatum subsp. nucleatum (strain ATCC 25586 / DSM 15643 / BCRC 10681 / CIP 101130 / JCM 8532 / KCTC 2640 / LMG 13131 / VPI 4355) protein is CRISPR-associated endoribonuclease Cas2.